The following is a 189-amino-acid chain: Transcription factor FapR (189 aa).

Belongs to the FapR family.

Transcriptional factor involved in regulation of membrane lipid biosynthesis by repressing genes involved in fatty acid and phospholipid metabolism. This chain is Transcription factor FapR, found in Listeria monocytogenes serotype 4a (strain HCC23).